The sequence spans 216 residues: Protein-L-isoaspartate O-methyltransferase (216 aa).

Serine 65 is a catalytic residue.

This sequence belongs to the methyltransferase superfamily. L-isoaspartyl/D-aspartyl protein methyltransferase family.

It localises to the cytoplasm. The catalysed reaction is [protein]-L-isoaspartate + S-adenosyl-L-methionine = [protein]-L-isoaspartate alpha-methyl ester + S-adenosyl-L-homocysteine. Its function is as follows. Catalyzes the methyl esterification of L-isoaspartyl residues in peptides and proteins that result from spontaneous decomposition of normal L-aspartyl and L-asparaginyl residues. It plays a role in the repair and/or degradation of damaged proteins. This chain is Protein-L-isoaspartate O-methyltransferase, found in Chlorobium phaeobacteroides (strain DSM 266 / SMG 266 / 2430).